Here is an 810-residue protein sequence, read N- to C-terminus: Bifunctional aspartokinase/homoserine dehydrogenase 2 (810 aa).

An aspartokinase region spans residues 2–252; the sequence is SVIAQAGAKG…VKDACLLPLL (251 aa). The interface stretch occupies residues 253 to 463; sequence RLDEASELAR…RAEKRIGLVL (211 aa). Positions 464–810 are homoserine dehydrogenase; sequence FGKGNIGSRW…SDINRLAQLL (347 aa). NADP(+)-binding residues include asparagine 468 and isoleucine 469. Residues isoleucine 469 and valine 498 each contribute to the NAD(+) site. Residue isoleucine 469 participates in NADPH binding. Positions 501, 549, and 573 each coordinate NADP(+). Threonine 549 serves as a coordination point for NAD(+). Positions 549 and 573 each coordinate NADPH. Na(+)-binding residues include valine 603, alanine 605, and leucine 607. Glycine 658 and glutamate 661 together coordinate NADP(+). L-homoserine is bound by residues glutamate 661 and aspartate 672. The Proton donor role is filled by lysine 676. Glycine 791 lines the NADP(+) pocket. Glycine 791 is an NAD(+) binding site. Glycine 791 is a binding site for NADPH.

The protein in the N-terminal section; belongs to the aspartokinase family. This sequence in the C-terminal section; belongs to the homoserine dehydrogenase family. Homotetramer. A metal cation is required as a cofactor.

The enzyme catalyses L-homoserine + NADP(+) = L-aspartate 4-semialdehyde + NADPH + H(+). It carries out the reaction L-homoserine + NAD(+) = L-aspartate 4-semialdehyde + NADH + H(+). The catalysed reaction is L-aspartate + ATP = 4-phospho-L-aspartate + ADP. It participates in amino-acid biosynthesis; L-lysine biosynthesis via DAP pathway; (S)-tetrahydrodipicolinate from L-aspartate: step 1/4. Its pathway is amino-acid biosynthesis; L-methionine biosynthesis via de novo pathway; L-homoserine from L-aspartate: step 1/3. It functions in the pathway amino-acid biosynthesis; L-methionine biosynthesis via de novo pathway; L-homoserine from L-aspartate: step 3/3. The protein operates within amino-acid biosynthesis; L-threonine biosynthesis; L-threonine from L-aspartate: step 1/5. It participates in amino-acid biosynthesis; L-threonine biosynthesis; L-threonine from L-aspartate: step 3/5. Bifunctional aspartate kinase and homoserine dehydrogenase that catalyzes the first and the third steps toward the synthesis of lysine, methionine and threonine from aspartate. The protein is Bifunctional aspartokinase/homoserine dehydrogenase 2 (metL) of Escherichia coli (strain K12).